Here is a 540-residue protein sequence, read N- to C-terminus: Cystathionine gamma-synthase 1, chloroplastic (540 aa).

The N-terminal 78 residues, 1 to 78, are a transit peptide targeting the chloroplast; it reads MAVSSCARAF…RNCSNIGVAQ (78 aa). Residues Tyr203, Arg205, Gly233, Met234, Tyr258, Ser353, and Thr355 each contribute to the pyridoxal 5'-phosphate site. Lys356 bears the N6-(pyridoxal phosphate)lysine mark.

It belongs to the trans-sulfuration enzymes family. In terms of assembly, forms homotetramers composed of 2 homodimers. Pyridoxal 5'-phosphate is required as a cofactor.

It localises to the plastid. It is found in the chloroplast. The enzyme catalyses O-phospho-L-homoserine + L-cysteine = L,L-cystathionine + phosphate. It carries out the reaction O-succinyl-L-homoserine + L-cysteine = L,L-cystathionine + succinate + H(+). It functions in the pathway amino-acid biosynthesis; L-methionine biosynthesis via de novo pathway; L-cystathionine from O-succinyl-L-homoserine: step 1/1. Its activity is regulated as follows. Irreversibly inactivated by DL-propargylglycine. In terms of biological role, catalyzes the first committed step of methionine (Met) biosynthesis. Catalyzes the formation of L-cystathionine from homoserine esters and L-cysteine, via a gamma-replacement reaction. This is Cystathionine gamma-synthase 1, chloroplastic from Nicotiana tabacum (Common tobacco).